A 637-amino-acid polypeptide reads, in one-letter code: 1-deoxy-D-xylulose-5-phosphate synthase (637 aa).

Residues H71 and 112-114 contribute to the thiamine diphosphate site; that span reads SHA. Position 144 (D144) interacts with Mg(2+). Thiamine diphosphate-binding positions include 145–146, N173, Y284, and E365; that span reads GA. N173 provides a ligand contact to Mg(2+).

The protein belongs to the transketolase family. DXPS subfamily. As to quaternary structure, homodimer. It depends on Mg(2+) as a cofactor. Thiamine diphosphate is required as a cofactor.

The enzyme catalyses D-glyceraldehyde 3-phosphate + pyruvate + H(+) = 1-deoxy-D-xylulose 5-phosphate + CO2. It participates in metabolic intermediate biosynthesis; 1-deoxy-D-xylulose 5-phosphate biosynthesis; 1-deoxy-D-xylulose 5-phosphate from D-glyceraldehyde 3-phosphate and pyruvate: step 1/1. Its function is as follows. Catalyzes the acyloin condensation reaction between C atoms 2 and 3 of pyruvate and glyceraldehyde 3-phosphate to yield 1-deoxy-D-xylulose-5-phosphate (DXP). This chain is 1-deoxy-D-xylulose-5-phosphate synthase, found in Mycolicibacterium gilvum (strain PYR-GCK) (Mycobacterium gilvum (strain PYR-GCK)).